A 213-amino-acid polypeptide reads, in one-letter code: Pyridoxine/pyridoxamine 5'-phosphate oxidase (213 aa).

Substrate is bound by residues 8-11 and Lys-66; that span reads RKNY. FMN contacts are provided by residues 61 to 66, 76 to 77, Arg-82, Lys-83, and Gln-105; these read RIVLIK and FT. Positions 123, 127, and 131 each coordinate substrate. Residues 140 to 141 and Trp-184 contribute to the FMN site; that span reads QS. 190-192 provides a ligand contact to substrate; it reads RLH. Position 194 (Arg-194) interacts with FMN.

It belongs to the pyridoxamine 5'-phosphate oxidase family. In terms of assembly, homodimer. FMN serves as cofactor.

The enzyme catalyses pyridoxamine 5'-phosphate + O2 + H2O = pyridoxal 5'-phosphate + H2O2 + NH4(+). It carries out the reaction pyridoxine 5'-phosphate + O2 = pyridoxal 5'-phosphate + H2O2. Its pathway is cofactor metabolism; pyridoxal 5'-phosphate salvage; pyridoxal 5'-phosphate from pyridoxamine 5'-phosphate: step 1/1. The protein operates within cofactor metabolism; pyridoxal 5'-phosphate salvage; pyridoxal 5'-phosphate from pyridoxine 5'-phosphate: step 1/1. In terms of biological role, catalyzes the oxidation of either pyridoxine 5'-phosphate (PNP) or pyridoxamine 5'-phosphate (PMP) into pyridoxal 5'-phosphate (PLP). The protein is Pyridoxine/pyridoxamine 5'-phosphate oxidase of Paraburkholderia phytofirmans (strain DSM 17436 / LMG 22146 / PsJN) (Burkholderia phytofirmans).